A 556-amino-acid polypeptide reads, in one-letter code: Aplysianin-A (556 aa).

The signal sequence occupies residues 1-19 (MAVRFLALGLLIFVTSCSG). N-linked (GlcNAc...) asparagine glycosylation is found at Asn-150, Asn-177, Asn-374, Asn-399, Asn-414, and Asn-430.

This sequence to A.fulica achacin protein. As to quaternary structure, homotetramer. Albumen gland.

Functionally, has antibacterial activity against Gram-negative and Gram-positive bacteria. The sequence is that of Aplysianin-A from Aplysia kurodai (Kuroda's sea hare).